A 20-amino-acid polypeptide reads, in one-letter code: Conotoxin PnMLKM-D0211 (20 aa).

Residues 1 to 3 (VKR) constitute a propeptide that is removed on maturation. 3 disulfides stabilise this stretch: cysteine 4–cysteine 18, cysteine 5–cysteine 14, and cysteine 10–cysteine 17. A 4-hydroxyproline modification is found at proline 16. Tryptophan 19 carries the post-translational modification Tryptophan amide.

This sequence belongs to the conotoxin M superfamily. In terms of tissue distribution, expressed by the venom duct.

The protein localises to the secreted. The protein is Conotoxin PnMLKM-D0211 of Conus pennaceus (Feathered cone).